We begin with the raw amino-acid sequence, 501 residues long: Suppressor of hairless protein homolog (501 aa).

3 DNA-binding regions span residues Gln58–Phe68, Ser166–Lys171, and Arg193–Thr198. The IPT/TIG domain occupies Pro356 to Thr446.

It belongs to the Su(H) family. Interacts with activated Notch proteins. Forms a ternary complex with nrarp and the intracellular domain (NICD) of notch1. Interacts with rita1, leading to nuclear export, prevent the interaction between rbpj and NICD product and subsequent down-regulation of the Notch signaling pathway.

It is found in the nucleus. The protein resides in the cytoplasm. Functionally, transcriptional regulator that plays a central role in Notch signaling, a signaling pathway involved in cell-cell communication that regulates a broad spectrum of cell-fate determinations. Acts as a transcriptional repressor when it is not associated with Notch proteins. When associated with some NICD product of Notch proteins (Notch intracellular domain), it acts as a transcriptional activator that activates transcription of Notch target genes. Required for the transcriptional activation of ESR1, suggesting that it is required during primary neurogenesis in embryos. Binds to the oxygen responsive element of COX4I2 and activates its transcription under hypoxia conditions (4% oxygen). The sequence is that of Suppressor of hairless protein homolog (rbpj) from Xenopus laevis (African clawed frog).